Reading from the N-terminus, the 302-residue chain is Troponin T, cardiac muscle isoforms (302 aa).

Residues 1 to 55 are compositionally biased toward acidic residues; that stretch reads MSDSEEVVEEYEQEQEEEYVEEEEEEWLEEDDGQEDQVDEEEEETEETTAEEQED. Disordered stretches follow at residues 1–99, 138–230, and 280–302; these read MSDS…GERL, KDRI…RKPL, and SDHQKVKGSKAARGKTMVGGRWK. Serine 2 bears the N-acetylserine mark. The residue at position 2 (serine 2) is a Phosphoserine; by CK2. The span at 65–79 shows a compositional bias: basic and acidic residues; it reads EGDREQEPGEGESKP. The span at 82–93 shows a compositional bias: pro residues; the sequence is KPFMPNLVPPKI. 2 stretches are compositionally biased toward basic and acidic residues: residues 138 to 186 and 204 to 230; these read KDRI…EKEA and KSEKKGGKKQTEREKKKKILSERRKPL.

This sequence belongs to the troponin T family.

Its function is as follows. Troponin T is the tropomyosin-binding subunit of troponin, the thin filament regulatory complex which confers calcium-sensitivity to striated muscle actomyosin ATPase activity. In Gallus gallus (Chicken), this protein is Troponin T, cardiac muscle isoforms (TNNT2).